The following is a 515-amino-acid chain: Fatty acyl-CoA reductase 2 (515 aa).

The Cytoplasmic segment spans residues 1 to 464 (MSMIAAFYSN…KAKQHLRRLR (464 aa)). The helical transmembrane segment at 465-484 (NIHYLFNTALFLIIWRLLIA) threads the bilayer. The Peroxisomal portion of the chain corresponds to 485-515 (RSQMARNVWFFIVSFCYKFISYFRASSTLKV).

It belongs to the fatty acyl-CoA reductase family. In terms of tissue distribution, specifically expressed in the meibomian glands of the eyelid and the sebaceous glands of the skin. Also expressed in the brain where large quantities of ether lipids are synthesized.

It localises to the peroxisome membrane. The catalysed reaction is a long-chain fatty acyl-CoA + 2 NADPH + 2 H(+) = a long-chain primary fatty alcohol + 2 NADP(+) + CoA. The enzyme catalyses hexadecanoyl-CoA + 2 NADPH + 2 H(+) = hexadecan-1-ol + 2 NADP(+) + CoA. It catalyses the reaction octadecanoyl-CoA + 2 NADPH + 2 H(+) = octadecan-1-ol + 2 NADP(+) + CoA. It carries out the reaction a very long-chain fatty acyl-CoA + 2 NADPH + 2 H(+) = a very long-chain primary fatty alcohol + 2 NADP(+) + CoA. The catalysed reaction is an ultra-long-chain fatty acyl-CoA + 2 NADPH + 2 H(+) = an ultra long-chain primary fatty alcohol + 2 NADP(+) + CoA. The enzyme catalyses eicosanoyl-CoA + 2 NADPH + 2 H(+) = eicosan-1-ol + 2 NADP(+) + CoA. It catalyses the reaction docosanoyl-CoA + 2 NADPH + 2 H(+) = docosan-1-ol + 2 NADP(+) + CoA. It carries out the reaction tetracosanoyl-CoA + 2 NADPH + 2 H(+) = tetracosan-1-ol + 2 NADP(+) + CoA. The catalysed reaction is hexacosanoyl-CoA + 2 NADPH + 2 H(+) = hexacosan-1-ol + 2 NADP(+) + CoA. The enzyme catalyses octacosanoyl-CoA + 2 NADPH + 2 H(+) = octacosan-1-ol + 2 NADP(+) + CoA. It catalyses the reaction triacontanoyl-CoA + 2 NADPH + 2 H(+) = triacontan-1-ol + 2 NADP(+) + CoA. It carries out the reaction 18-methylnonadecanoyl-CoA + 2 NADPH + 2 H(+) = 18-methylnonadecan-1-ol + 2 NADP(+) + CoA. The catalysed reaction is 20-methylheneicosanoyl-CoA + 2 NADPH + 2 H(+) = 20-methylheneicosan-1-ol + 2 NADP(+) + CoA. The enzyme catalyses 22-methyltricosanoyl-CoA + 2 NADPH + 2 H(+) = 22-methyltricosan-1-ol + 2 NADP(+) + CoA. It catalyses the reaction 24-methylpentacosanoyl-CoA + 2 NADPH + 2 H(+) = 24-methylpentacosan-1-ol + 2 NADP(+) + CoA. In terms of biological role, catalyzes the reduction of saturated but not unsaturated C16 or C18 fatty acyl-CoA to fatty alcohols. A lower activity can be observed with shorter fatty acyl-CoA substrates. Can produce very long-chain and ultra long-chain FAls, regardless of whether they have a straight or branched chain. It may play a role in the production of ether lipids/plasmalogens and wax monoesters which synthesis requires fatty alcohols as substrates. The protein is Fatty acyl-CoA reductase 2 of Mus musculus (Mouse).